Here is a 193-residue protein sequence, read N- to C-terminus: Ion-translocating oxidoreductase complex subunit A (193 aa).

A run of 6 helical transmembrane segments spans residues 5–25 (LLLF…FLGL), 39–59 (MGMG…AWLI), 63–83 (ILIP…VIAV), 102–122 (LLGI…VALL), 134–154 (ALYG…FAAI), and 171–191 (AIAL…NGLV).

It belongs to the NqrDE/RnfAE family. In terms of assembly, the complex is composed of six subunits: RsxA, RsxB, RsxC, RsxD, RsxE and RsxG.

It is found in the cell inner membrane. Functionally, part of a membrane-bound complex that couples electron transfer with translocation of ions across the membrane. Required to maintain the reduced state of SoxR. The sequence is that of Ion-translocating oxidoreductase complex subunit A from Shigella sonnei (strain Ss046).